A 445-amino-acid chain; its full sequence is Phosphoglucosamine mutase (445 aa).

Ser-102 acts as the Phosphoserine intermediate in catalysis. 4 residues coordinate Mg(2+): Ser-102, Asp-241, Asp-243, and Asp-245. Ser-102 is subject to Phosphoserine.

Belongs to the phosphohexose mutase family. Mg(2+) serves as cofactor. In terms of processing, activated by phosphorylation.

The enzyme catalyses alpha-D-glucosamine 1-phosphate = D-glucosamine 6-phosphate. In terms of biological role, catalyzes the conversion of glucosamine-6-phosphate to glucosamine-1-phosphate. The protein is Phosphoglucosamine mutase of Variovorax paradoxus (strain S110).